Reading from the N-terminus, the 384-residue chain is Protein RecA (384 aa).

Residue 76-83 (GPESSGKT) coordinates ATP. The disordered stretch occupies residues 346-365 (QGSAEPEKAAKPEKVEKADK). The segment covering 350–365 (EPEKAAKPEKVEKADK) has biased composition (basic and acidic residues).

The protein belongs to the RecA family.

The protein localises to the cytoplasm. Can catalyze the hydrolysis of ATP in the presence of single-stranded DNA, the ATP-dependent uptake of single-stranded DNA by duplex DNA, and the ATP-dependent hybridization of homologous single-stranded DNAs. It interacts with LexA causing its activation and leading to its autocatalytic cleavage. This is Protein RecA from Polaromonas naphthalenivorans (strain CJ2).